The primary structure comprises 616 residues: Centrosomal protein of 70 kDa (616 aa).

Coiled-coil stretches lie at residues 96-210 (EETT…EEER) and 273-335 (NYKG…NIKL). The TPR repeat unit spans residues 502–535 (NGVFPRMNEVYTRLGEMNNAVRNLQELLELDSSS).

In terms of assembly, directly interacts with tubulin-gamma; this interaction determines centrosomal localization.

The protein localises to the cytoplasm. It localises to the cytoskeleton. The protein resides in the microtubule organizing center. It is found in the centrosome. Functionally, plays a role in the organization of both preexisting and nascent microtubules in interphase cells. During mitosis, required for the organization and orientation of the mitotic spindle. This Mus musculus (Mouse) protein is Centrosomal protein of 70 kDa (Cep70).